The chain runs to 421 residues: Enolase (421 aa).

Gln-165 lines the (2R)-2-phosphoglycerate pocket. Catalysis depends on Glu-207, which acts as the Proton donor. Mg(2+)-binding residues include Asp-244, Glu-285, and Asp-312. The (2R)-2-phosphoglycerate site is built by Lys-337, Arg-366, Ser-367, and Lys-388. The active-site Proton acceptor is the Lys-337.

Belongs to the enolase family. Mg(2+) is required as a cofactor.

The protein localises to the cytoplasm. The protein resides in the secreted. It is found in the cell surface. It carries out the reaction (2R)-2-phosphoglycerate = phosphoenolpyruvate + H2O. It participates in carbohydrate degradation; glycolysis; pyruvate from D-glyceraldehyde 3-phosphate: step 4/5. Catalyzes the reversible conversion of 2-phosphoglycerate (2-PG) into phosphoenolpyruvate (PEP). It is essential for the degradation of carbohydrates via glycolysis. In Ehrlichia canis (strain Jake), this protein is Enolase.